We begin with the raw amino-acid sequence, 153 residues long: Ribosome maturation factor RimP (153 aa).

This sequence belongs to the RimP family.

The protein localises to the cytoplasm. In terms of biological role, required for maturation of 30S ribosomal subunits. This Clostridium botulinum (strain Kyoto / Type A2) protein is Ribosome maturation factor RimP.